The chain runs to 1415 residues: MNQELSTNPFNPVAPVKTFDEIKISLASPERILSWSYGEIKKPETINYRTFKPERDGLFCARIFGPIKDYECLCGKYKRMKYRGVVCEKCGVEVTLQKVRRERMGHIELAAPVAHIWFLKSLPSRIGLMLDMTLRDLERILYFENYVVIEPGLTDLTYGQLMTEEEFLDAQDQYGADAFTANIGAEAIREMLSAIDLEQTAETLREELKEATGELKPKKIIKRLKIVESFLESGNRPEWMILTVLPVIPPELRPLVPLDGGRFATSDLNDLYRRVINRNNRLKRLIELRAPDIIVRNEKRMLQEAVDALFDNGRRGRVITGTNKRPLKSLSDMLKGKQGRFRQNLLGKRVDFSGRSVIVTGPELKLHQCGLPKKMALELFKPFIYSRLEAKGLSSTVKQAKKLVEKERPEVWDILDEVIREHPVLLNRAPTLHRLGIQAFEPILIEGKAIQLHPLVCSAFNADFDGDQMAVHVPLSLEAQLEARVLMMSTNNVLSPANGAPIIVPSQDMVLGLYYTTMERRGMKGEGMAFSSVEEVEHALAAGEVHLHATITARIKQIDDEGNEVVKRYQTTPGRLRLGNLLPLNAKAPFELVNRLLRKKDVQNVIDTVYRYCGQKESVIFCDQIMGMGFREAFKAGISFGKDDMLIPDTKWPIVNEVRDQVKEFEQQYMDGLITQGEKYNKVVDAWSKCSDKVAGEMMAEISAVRYDDAGAEKEPNSVYMMSHSGARGSPAQMKQLGGMRGLMAKPNGEIIETPIISNFKEGLTVLEYFNSTHGARKGLADTALKTANSGYLTRRLVDVAQDCIVRSHDCGTENAITASAAVNDGEVVSPLSERVLGRVAAEDILVPGTDEVVVARGELIDERRADLIDQANVALVRIRSPLTCEAEEGVCAMCYGRDLARGTLVNIGEAVGIIAAQSIGEPGTQLTMRTFHIGGIAQGGQQSFLEASQEGRIEFRNPNLLENANGEQIVMGRNMQLAIIDEAGQERATHKLTYGAKVHVKDGQSVKRGTRLFEWDPYTLPIIAEKGGVARFVDLVSGISVREDTDEATGMTQKIVSDWRSTPKGGDLKPEIIIMDPDTGNPMRNEAGNPISYPMSVEAILSVEDGQTVRAGDVVARIPREGARTKDITGGLPRVAELFEARRPKDHAIIAENDGYVRFGKDYKNKRRITIEPVDETLNSVEYMVPKGKHIPVQEGDFVQKGDYIMDGNPAPHDILRIMGVEALANYMIDEVQEVYRLQGVKINDKHIEVIVRQMLQKYEILDSGETTLLKGEHVDKAELDETNEKAIQHGMRPAHAEPILLGITKASLQTRSFISAASFQETTRVLTEASVQGKRDKLVGLKENVIVGRLIPAGTGGATSRVKKIAHDRDQTVIDARRAEAESAAALAAPTDEVIDLGPEDSGLVETVESRKE.

Residues Cys-72, Cys-74, Cys-87, and Cys-90 each coordinate Zn(2+). Mg(2+) contacts are provided by Asp-463, Asp-465, and Asp-467. Zn(2+) contacts are provided by Cys-811, Cys-885, Cys-892, and Cys-895.

The protein belongs to the RNA polymerase beta' chain family. The RNAP catalytic core consists of 2 alpha, 1 beta, 1 beta' and 1 omega subunit. When a sigma factor is associated with the core the holoenzyme is formed, which can initiate transcription. Mg(2+) serves as cofactor. It depends on Zn(2+) as a cofactor.

The catalysed reaction is RNA(n) + a ribonucleoside 5'-triphosphate = RNA(n+1) + diphosphate. Its function is as follows. DNA-dependent RNA polymerase catalyzes the transcription of DNA into RNA using the four ribonucleoside triphosphates as substrates. This chain is DNA-directed RNA polymerase subunit beta', found in Cereibacter sphaeroides (strain ATCC 17025 / ATH 2.4.3) (Rhodobacter sphaeroides).